The primary structure comprises 218 residues: Adenylate kinase (218 aa).

An ATP-binding site is contributed by G10–T15. The NMP stretch occupies residues S30 to V59. AMP contacts are provided by residues T31, R36, G57–V59, G85–R88, and Q92. The interval G122–D159 is LID. ATP-binding positions include R123 and T132–Y133. The AMP site is built by R156 and R167. An ATP-binding site is contributed by G203.

This sequence belongs to the adenylate kinase family. In terms of assembly, monomer.

It localises to the cytoplasm. The catalysed reaction is AMP + ATP = 2 ADP. The protein operates within purine metabolism; AMP biosynthesis via salvage pathway; AMP from ADP: step 1/1. In terms of biological role, catalyzes the reversible transfer of the terminal phosphate group between ATP and AMP. Plays an important role in cellular energy homeostasis and in adenine nucleotide metabolism. This Chlorobaculum tepidum (strain ATCC 49652 / DSM 12025 / NBRC 103806 / TLS) (Chlorobium tepidum) protein is Adenylate kinase.